The chain runs to 969 residues: Isoleucine--tRNA ligase (969 aa).

The short motif at 68–78 is the 'HIGH' region element; sequence PYANGALHMGH. An L-isoleucyl-5'-AMP-binding site is contributed by glutamate 585. Positions 626–630 match the 'KMSKS' region motif; sequence KMSKS. Lysine 629 contributes to the ATP binding site. Zn(2+) contacts are provided by cysteine 939, cysteine 942, cysteine 959, and cysteine 962.

It belongs to the class-I aminoacyl-tRNA synthetase family. IleS type 1 subfamily. Monomer. The cofactor is Zn(2+).

Its subcellular location is the cytoplasm. It catalyses the reaction tRNA(Ile) + L-isoleucine + ATP = L-isoleucyl-tRNA(Ile) + AMP + diphosphate. Its function is as follows. Catalyzes the attachment of isoleucine to tRNA(Ile). As IleRS can inadvertently accommodate and process structurally similar amino acids such as valine, to avoid such errors it has two additional distinct tRNA(Ile)-dependent editing activities. One activity is designated as 'pretransfer' editing and involves the hydrolysis of activated Val-AMP. The other activity is designated 'posttransfer' editing and involves deacylation of mischarged Val-tRNA(Ile). This Prochlorococcus marinus (strain MIT 9211) protein is Isoleucine--tRNA ligase.